A 1074-amino-acid polypeptide reads, in one-letter code: Probable arabinosyltransferase C (1074 aa).

Helical transmembrane passes span 15 to 37 (ARLV…PLLP), 214 to 236 (LLKL…ALHV), 251 to 273 (SRWW…WHFV), 415 to 437 (IIIG…ALLV), 452 to 474 (RFGY…FLIF), 516 to 538 (SVAR…AMTL), 573 to 595 (THQF…VAVT), 608 to 630 (FGAA…WYVS), 645 to 667 (FGFT…WFHF), and 684 to 706 (LLVA…SLTL).

This sequence belongs to the emb family.

It is found in the cell membrane. Its function is as follows. Arabinosyl transferase responsible for the polymerization of arabinose into the arabinan of arabinogalactan. The chain is Probable arabinosyltransferase C (embC) from Mycolicibacterium smegmatis (Mycobacterium smegmatis).